Reading from the N-terminus, the 102-residue chain is Protein Tat (102 aa).

Positions 1 to 10 (MEPVDPRLEP) are enriched in basic and acidic residues. A disordered region spans residues 1-20 (MEPVDPRLEPWNHPGSQPKT). Positions 1-24 (MEPVDPRLEPWNHPGSQPKTACNK) are interaction with human CREBBP. A transactivation region spans residues 1–48 (MEPVDPRLEPWNHPGSQPKTACNKCYCKKCCYHCMCCFTKKGLGISYG). 3 residues coordinate Zn(2+): cysteine 22, cysteine 25, and cysteine 27. Positions 22–37 (CNKCYCKKCCYHCMCC) are cysteine-rich. Lysine 28 is modified (N6-acetyllysine; by host PCAF). 4 residues coordinate Zn(2+): cysteine 30, histidine 33, cysteine 34, and cysteine 37. The segment at 38-48 (FTKKGLGISYG) is core. The interval 47 to 102 (YGRKKRSQRRRPPKSSKDHQDPIPEQPLSRQQPGDQTGQKKQKKALEGKTEADPCD) is disordered. A compositionally biased stretch (basic residues) spans 48–60 (GRKKRSQRRRPPK). The short motif at 49 to 57 (RKKRSQRRR) is the Nuclear localization signal, RNA-binding (TAR), and protein transduction element. Residues 49–87 (RKKRSQRRRPPKSSKDHQDPIPEQPLSRQQPGDQTGQKK) form an interaction with the host capping enzyme RNGTT region. Residues lysine 50 and lysine 51 each carry the N6-acetyllysine; by host EP300 and GCN5L2 modification. The residue at position 52 (arginine 52) is an Asymmetric dimethylarginine; by host PRMT6. The span at 74–85 (LSRQQPGDQTGQ) shows a compositional bias: polar residues. Basic and acidic residues predominate over residues 90-102 (KALEGKTEADPCD).

It belongs to the lentiviruses Tat family. In terms of assembly, interacts with host CCNT1. Associates with the P-TEFb complex composed at least of Tat, P-TEFb (CDK9 and CCNT1), TAR RNA, RNA Pol II. Recruits the HATs CREBBP, TAF1/TFIID, EP300, PCAF and GCN5L2. Interacts with host KAT5/Tip60; this interaction targets the latter to degradation. Interacts with the host deacetylase SIRT1. Interacts with host capping enzyme RNGTT; this interaction stimulates RNGTT. Binds to host KDR, and to the host integrins ITGAV/ITGB3 and ITGA5/ITGB1. Interacts with host KPNB1/importin beta-1 without previous binding to KPNA1/importin alpha-1. Interacts with EIF2AK2. Interacts with host nucleosome assembly protein NAP1L1; this interaction may be required for the transport of Tat within the nucleus, since the two proteins interact at the nuclear rim. Interacts with host C1QBP/SF2P32; this interaction involves lysine-acetylated Tat. Interacts with the host chemokine receptors CCR2, CCR3 and CXCR4. Interacts with host DPP4/CD26; this interaction may trigger an anti-proliferative effect. Interacts with host LDLR. Interacts with the host extracellular matrix metalloproteinase MMP1. Interacts with host PRMT6; this interaction mediates Tat's methylation. Interacts with, and is ubiquitinated by MDM2/Hdm2. Interacts with host PSMC3 and HTATIP2. Interacts with STAB1; this interaction may overcome SATB1-mediated repression of IL2 and IL2RA (interleukin) in T cells by binding to the same domain than HDAC1. Interacts (when acetylated) with human CDK13, thereby increasing HIV-1 mRNA splicing and promoting the production of the doubly spliced HIV-1 protein Nef. Interacts with host TBP; this interaction modulates the activity of transcriptional pre-initiation complex. Interacts with host RELA. Interacts with host PLSCR1; this interaction negatively regulates Tat transactivation activity by altering its subcellular distribution. In terms of processing, asymmetrical arginine methylation by host PRMT6 seems to diminish the transactivation capacity of Tat and affects the interaction with host CCNT1. Acetylation by EP300, CREBBP, GCN5L2/GCN5 and PCAF regulates the transactivation activity of Tat. EP300-mediated acetylation of Lys-50 promotes dissociation of Tat from the TAR RNA through the competitive binding to PCAF's bromodomain. In addition, the non-acetylated Tat's N-terminus can also interact with PCAF. PCAF-mediated acetylation of Lys-28 enhances Tat's binding to CCNT1. Lys-50 is deacetylated by SIRT1. Post-translationally, polyubiquitination by host MDM2 does not target Tat to degradation, but activates its transactivation function and fosters interaction with CCNT1 and TAR RNA. In terms of processing, phosphorylated by EIF2AK2 on serine and threonine residues adjacent to the basic region important for TAR RNA binding and function. Phosphorylation of Tat by EIF2AK2 is dependent on the prior activation of EIF2AK2 by dsRNA.

The protein localises to the host nucleus. It localises to the host nucleolus. The protein resides in the host cytoplasm. Its subcellular location is the secreted. In terms of biological role, transcriptional activator that increases RNA Pol II processivity, thereby increasing the level of full-length viral transcripts. Recognizes a hairpin structure at the 5'-LTR of the nascent viral mRNAs referred to as the transactivation responsive RNA element (TAR) and recruits the cyclin T1-CDK9 complex (P-TEFb complex) that will in turn hyperphosphorylate the RNA polymerase II to allow efficient elongation. The CDK9 component of P-TEFb and other Tat-activated kinases hyperphosphorylate the C-terminus of RNA Pol II that becomes stabilized and much more processive. Other factors such as HTATSF1/Tat-SF1, SUPT5H/SPT5, and HTATIP2 are also important for Tat's function. Besides its effect on RNA Pol II processivity, Tat induces chromatin remodeling of proviral genes by recruiting the histone acetyltransferases (HATs) CREBBP, EP300 and PCAF to the chromatin. This also contributes to the increase in proviral transcription rate, especially when the provirus integrates in transcriptionally silent region of the host genome. To ensure maximal activation of the LTR, Tat mediates nuclear translocation of NF-kappa-B by interacting with host RELA. Through its interaction with host TBP, Tat may also modulate transcription initiation. Tat can reactivate a latently infected cell by penetrating in it and transactivating its LTR promoter. In the cytoplasm, Tat is thought to act as a translational activator of HIV-1 mRNAs. Extracellular circulating Tat can be endocytosed by surrounding uninfected cells via the binding to several surface receptors such as CD26, CXCR4, heparan sulfate proteoglycans (HSPG) or LDLR. Neurons are rarely infected, but they internalize Tat via their LDLR. Through its interaction with nuclear HATs, Tat is potentially able to control the acetylation-dependent cellular gene expression. Modulates the expression of many cellular genes involved in cell survival, proliferation or in coding for cytokines or cytokine receptors. Tat plays a role in T-cell and neurons apoptosis. Tat induced neurotoxicity and apoptosis probably contribute to neuroAIDS. Circulating Tat also acts as a chemokine-like and/or growth factor-like molecule that binds to specific receptors on the surface of the cells, affecting many cellular pathways. In the vascular system, Tat binds to ITGAV/ITGB3 and ITGA5/ITGB1 integrins dimers at the surface of endothelial cells and competes with bFGF for heparin-binding sites, leading to an excess of soluble bFGF. The chain is Protein Tat from Human immunodeficiency virus type 1 group N (isolate YBF106) (HIV-1).